The sequence spans 494 residues: uncharacterized protein (494 aa).

The region spanning 4 to 82 (FTITVKKTEG…NMIIEPLEGF (79 aa)) is the 2Fe-2S ferredoxin-type domain. [2Fe-2S] cluster is bound by residues Cys46, Cys51, Cys54, and Cys66. 2 consecutive 4Fe-4S ferredoxin-type domains span residues 127-157 (DLKD…NYPG) and 178-208 (EKEA…IVHN). 8 residues coordinate [4Fe-4S] cluster: Cys137, Cys140, Cys143, Cys147, Cys189, Cys192, Cys195, and Cys199.

It belongs to the succinate dehydrogenase/fumarate reductase iron-sulfur protein family.

This is an uncharacterized protein from Methanococcus maripaludis (strain DSM 14266 / JCM 13030 / NBRC 101832 / S2 / LL).